A 103-amino-acid polypeptide reads, in one-letter code: Large ribosomal subunit protein uL22c (103 aa).

The protein belongs to the universal ribosomal protein uL22 family. Part of the 50S ribosomal subunit.

It is found in the plastid. It localises to the chloroplast. This protein binds specifically to 23S rRNA. In terms of biological role, the globular domain of the protein is located near the polypeptide exit tunnel on the outside of the subunit, while an extended beta-hairpin is found that lines the wall of the exit tunnel in the center of the 70S ribosome. This Cyanidium caldarium (Red alga) protein is Large ribosomal subunit protein uL22c (rpl22).